The sequence spans 96 residues: (4S)-4-hydroxy-5-phosphonooxypentane-2,3-dione isomerase (96 aa).

Positions 2-91 constitute an ABM domain; the sequence is HVTLVEINVH…MTGPRKKRLF (90 aa).

The protein belongs to the LsrG family. Homodimer.

It is found in the cytoplasm. The enzyme catalyses (2S)-2-hydroxy-3,4-dioxopentyl phosphate = 3-hydroxy-2,4-dioxopentyl phosphate. In terms of biological role, involved in the degradation of phospho-AI-2, thereby terminating induction of the lsr operon and closing the AI-2 signaling cycle. Catalyzes the conversion of (4S)-4-hydroxy-5-phosphonooxypentane-2,3-dione (P-DPD) to 3-hydroxy-5-phosphonooxypentane-2,4-dione (P-HPD). The protein is (4S)-4-hydroxy-5-phosphonooxypentane-2,3-dione isomerase of Escherichia coli O157:H7.